Reading from the N-terminus, the 142-residue chain is uncharacterized protein (142 aa).

Residues 19 to 54 (IHTTPHPHTPHHTHHTHTTPTPTPHPHTHTPTPERS) are disordered. The span at 26–35 (HTPHHTHHTH) shows a compositional bias: basic residues.

This is an uncharacterized protein from Saccharomyces cerevisiae (strain ATCC 204508 / S288c) (Baker's yeast).